Consider the following 148-residue polypeptide: Glutamate mutase sigma subunit 2 (148 aa).

Positions 1–134 constitute a B12-binding domain; the sequence is MRTVILGVIG…EALKADLGHR (134 aa). Residues 11–15, His-14, 59–61, and 90–94 each bind adenosylcob(III)alamin; these read SDAHV, SSL, and NLAVG. The span at 129–141 shows a compositional bias: basic and acidic residues; that stretch reads ADLGHRSREEASS. The segment at 129-148 is disordered; it reads ADLGHRSREEASSEKVQLGS.

This sequence belongs to the methylaspartate mutase GlmS subunit family. Heterotetramer composed of 2 epsilon subunits (GlmE) and 2 sigma subunits (GlmS). GlmE exists as a homodimer and GlmS as a monomer. It depends on adenosylcob(III)alamin as a cofactor.

It carries out the reaction (2S,3S)-3-methyl-L-aspartate = L-glutamate. Its pathway is amino-acid degradation; L-glutamate degradation via mesaconate pathway; acetate and pyruvate from L-glutamate: step 1/4. Its function is as follows. Catalyzes the carbon skeleton rearrangement of L-glutamate to L-threo-3-methylaspartate ((2S,3S)-3-methylaspartate). This Haloarcula marismortui (strain ATCC 43049 / DSM 3752 / JCM 8966 / VKM B-1809) (Halobacterium marismortui) protein is Glutamate mutase sigma subunit 2.